We begin with the raw amino-acid sequence, 192 residues long: MTITISAVILAGGKARRMGGQDKGLQILGKQSLIEHVINRLQPQIHQISINTNRNQTEYAKFGFPVFSDELPDFQGPLSGMLTALEKTKSDFILFTPCDTPFFPMNLLDKLKSAVKNDRTLIAYACDEEREHPVFCLMSVQLKEKLRHYLASGERRLLQFMKENGGISVKFTQEEGNFENFNTLDDLKKTVI.

Residues 10-12 (LAG), lysine 23, asparagine 51, aspartate 69, and aspartate 99 each bind GTP. Residue aspartate 99 coordinates Mg(2+).

The protein belongs to the MobA family. Monomer. Requires Mg(2+) as cofactor.

The protein localises to the cytoplasm. The catalysed reaction is Mo-molybdopterin + GTP + H(+) = Mo-molybdopterin guanine dinucleotide + diphosphate. In terms of biological role, transfers a GMP moiety from GTP to Mo-molybdopterin (Mo-MPT) cofactor (Moco or molybdenum cofactor) to form Mo-molybdopterin guanine dinucleotide (Mo-MGD) cofactor. This is Molybdenum cofactor guanylyltransferase from Haemophilus influenzae (strain 86-028NP).